Reading from the N-terminus, the 450-residue chain is Phosphoglucosamine mutase (450 aa).

The Phosphoserine intermediate role is filled by serine 102. Positions 102, 242, 244, and 246 each coordinate Mg(2+). Serine 102 carries the phosphoserine modification.

Belongs to the phosphohexose mutase family. The cofactor is Mg(2+). In terms of processing, activated by phosphorylation.

The enzyme catalyses alpha-D-glucosamine 1-phosphate = D-glucosamine 6-phosphate. Its function is as follows. Catalyzes the conversion of glucosamine-6-phosphate to glucosamine-1-phosphate. This Staphylococcus haemolyticus (strain JCSC1435) protein is Phosphoglucosamine mutase.